Consider the following 147-residue polypeptide: Hemoglobin subunit delta (147 aa).

The 145-residue stretch at 3 to 147 (HLTADETALV…VANALAHKYH (145 aa)) folds into the Globin domain. A Phosphoserine modification is found at S51. Heme b contacts are provided by H64 and H93.

It belongs to the globin family. In terms of assembly, heterotetramer of two delta chains and two alpha chains. Red blood cells.

The polypeptide is Hemoglobin subunit delta (HBD) (Dugong dugon (Dugong)).